The primary structure comprises 575 residues: Thrombomodulin (575 aa).

Residues 1–18 form the signal peptide; the sequence is MLGVLVLGALALAGLGFP. Residues 19 to 515 lie on the Extracellular side of the membrane; that stretch reads APAEPQPGGS…TPPAVGLVHS (497 aa). Residues 31 to 169 enclose the C-type lectin domain; it reads VEHDCFALYP…VKADGFLCEF (139 aa). N-linked (GlcNAc...) asparagine glycosylation is found at Asn47, Asn115, and Asn116. Disulfide bonds link Cys137–Cys158, Cys245–Cys256, Cys252–Cys265, Cys267–Cys280, Cys288–Cys296, Cys292–Cys308, Cys310–Cys323, Cys329–Cys340, Cys336–Cys349, Cys351–Cys362, Cys369–Cys378, Cys374–Cys388, Cys390–Cys404, Cys408–Cys413, Cys417–Cys425, Cys427–Cys439, Cys445–Cys455, Cys451–Cys464, and Cys466–Cys480. EGF-like domains follow at residues 241-281 and 284-324; these read GAWD…RSCT and ATQS…HRCE. The EGF-like 3; calcium-binding domain maps to 325–363; sequence DVDDCILEPSPCPQRCVNTQGGFECHCYPNYDLVDGECV. (3R)-3-hydroxyasparagine is present on Asn342. EGF-like domains are found at residues 365–405 and 404–440; these read PVDP…HRCQ and CQMF…FICT. N-linked (GlcNAc...) asparagine glycosylation is present at Asn382. Asn409 is a glycosylation site (N-linked (GlcNAc...) asparagine). Residues 441–481 enclose the EGF-like 6; calcium-binding domain; that stretch reads DIDECENGGFCSGVCHNLPGTFECICGPDSALARHIGTDCD. Residues 481-515 form an involved in alpha-L/beta-2 and alpha-M/beta-2 integrin binding region; that stretch reads DSGKVDGGDSGSGEPPPSPTPGSTLTPPAVGLVHS. Residues 484-506 are disordered; that stretch reads KVDGGDSGSGEPPPSPTPGSTLT. Residues Ser490 and Ser492 are each glycosylated (O-linked (Xyl...) (chondroitin sulfate) serine). The helical transmembrane segment at 516–539 threads the bilayer; that stretch reads GLLIGISIASLCLVVALLALLCHL. Over 540 to 575 the chain is Cytoplasmic; that stretch reads RKKQGAARAKMEYKCAAPSKEVVLQHVRTERTPQRL.

In terms of assembly, interacts with ITGAL, ITGAM and ITGB2. Interacts with thrombin/F2; this interaction switches the specificity of thrombin from a procoagulant to an anticoagulant and antifibrinolytic protease. Interacts with ANGP1 and ANGP2; these interactions significantly inhibit the generation of activated PC and TAFIa/CPB2 by the thrombin/thrombomodulin complex. Interacts with PF4; this interaction enhances generation of activated protein C. Interacts with HMGB1; this interaction inhibits HMGB1 inflammatory activity. In terms of processing, N-glycosylated. Post-translationally, the iron and 2-oxoglutarate dependent 3-hydroxylation of aspartate and asparagine is (R) stereospecific within EGF domains. In terms of tissue distribution, endothelial cells are unique in synthesizing thrombomodulin.

Its subcellular location is the membrane. Endothelial cell receptor that plays a critical role in regulating several physiological processes including hemostasis, coagulation, fibrinolysis, inflammation, and angiogenesis. Acts as a cofactor for thrombin activation of protein C/PROC on the surface of vascular endothelial cells leading to initiation of the activated protein C anticoagulant pathway. Also accelerates the activation of the plasma carboxypeptidase B2/CPB2, which catalyzes removal of C-terminal basic amino acids from its substrates including kinins or anaphylatoxins leading to fibrinolysis inhibition. Plays critical protective roles in changing the cleavage specificity of protease-activated receptor 1/PAR1, inhibiting endothelial cell permeability and inflammation. Suppresses inflammation distinctly from its anticoagulant cofactor activity by sequestering HMGB1 thereby preventing it from engaging cellular receptors such as RAGE and contributing to the inflammatory response. The protein is Thrombomodulin (THBD) of Homo sapiens (Human).